The following is a 275-amino-acid chain: Aliphatic sulfonates import ATP-binding protein SsuB 1 (275 aa).

The ABC transporter domain occupies 34–260; that stretch reads ISLTGLEKSF…RHGHPGLCEL (227 aa). Position 66–73 (66–73) interacts with ATP; sequence GKSGCGKS.

It belongs to the ABC transporter superfamily. Aliphatic sulfonates importer (TC 3.A.1.17.2) family. The complex is composed of two ATP-binding proteins (SsuB), two transmembrane proteins (SsuC) and a solute-binding protein (SsuA).

The protein localises to the cell inner membrane. It carries out the reaction ATP + H2O + aliphatic sulfonate-[sulfonate-binding protein]Side 1 = ADP + phosphate + aliphatic sulfonateSide 2 + [sulfonate-binding protein]Side 1.. Part of the ABC transporter complex SsuABC involved in aliphatic sulfonates import. Responsible for energy coupling to the transport system. The protein is Aliphatic sulfonates import ATP-binding protein SsuB 1 of Rhizobium johnstonii (strain DSM 114642 / LMG 32736 / 3841) (Rhizobium leguminosarum bv. viciae).